The sequence spans 327 residues: Neurogenic differentiation factor 6-A (327 aa).

The interval 17-85 is disordered; it reads GANFPRDCVG…KKMTKARVDR (69 aa). Residues 24 to 46 show a composition bias toward basic and acidic residues; the sequence is CVGDLKGNKQEPFEKEETLSHVM. Over residues 47–63 the composition is skewed to acidic residues; it reads DDDDSEKDEDEREDGQD. Residues 68–80 are compositionally biased toward basic residues; that stretch reads PRRRGPRKKKMTK. Positions 74–80 match the Nuclear localization signal motif; that stretch reads RKKKMTK. Positions 88-140 constitute a bHLH domain; it reads VRRMEANARERNRMHGLNNALDSLRKVVPCYSKTQKLSKIETLRLAKNYIWAL.

Efficient DNA binding requires dimerization with another bHLH protein. Embryonic olfactory bulbs. In adult, expressed in brain, eye, intestine, muscle, ovary and skin.

The protein resides in the nucleus. In terms of biological role, differentiation factor required for neurogenesis. Acts as an upstream activator of isl1. In Danio rerio (Zebrafish), this protein is Neurogenic differentiation factor 6-A.